Consider the following 256-residue polypeptide: Large ribosomal subunit protein uL2 (256 aa).

The tract at residues 208–230 is disordered; the sequence is EHPHGGGNHQHIGKASTVKRGTS.

This sequence belongs to the universal ribosomal protein uL2 family. In terms of tissue distribution, in larvae tissues examined: gut, brain imaginal disk, salivary glands, fat body, muscles, epidermis and trachaea.

The protein resides in the cytoplasm. The chain is Large ribosomal subunit protein uL2 (RpL8) from Drosophila melanogaster (Fruit fly).